Reading from the N-terminus, the 632-residue chain is Deoxynucleoside triphosphate triphosphohydrolase SAMHD1 (632 aa).

The segment at 1–22 (MKGINGAKRVRHDASPSAQDGY) is disordered. The region spanning 44-107 (WDVEEVCLFL…LSCLRMLCQN (64 aa)) is the SAM domain. 2 residues coordinate GTP: Lys113 and Val114. Residue Asn116 participates in dGTP binding. Residues Asp134, Gln139, and Arg142 each coordinate GTP. 4 residues coordinate dGTP: Gln146, Leu147, Val153, and Arg161. Residue Gln146 coordinates dATP. Gln146 is a binding site for dCTP. Gln146 is a binding site for dTTP. DATP is bound at residue Arg161. Position 161 (Arg161) interacts with dCTP. A dTTP-binding site is contributed by Arg161. The 161-residue stretch at 161 to 321 (RFEHSIGVGY…GIDVDKWDYF (161 aa)) folds into the HD domain. Mn(2+) is bound by residues His164, His203, and Asp204. 2 residues coordinate dATP: His207 and His212. The dCTP site is built by His207 and His212. 2 residues coordinate dTTP: His207 and His212. The active site involves His230. Residue Asp316 coordinates Mn(2+). Residues Lys317, Tyr320, Asp324, Arg338, Arg357, Lys359, Asn363, Arg371, Tyr379, Gln380, His381, and Lys382 each coordinate dGTP. DATP contacts are provided by Lys317, Tyr320, and Asp324. DCTP-binding residues include Lys317, Tyr320, and Asp324. 3 residues coordinate dTTP: Lys317, Tyr320, and Asp324. Arg371 is a dATP binding site. Arg371 is a binding site for dCTP. Gln380 is a dATP binding site. Residue Gln380 coordinates dCTP. Gln380 lines the dTTP pocket. GTP contacts are provided by Arg456, Lys460, and Lys529. Residue Lys529 participates in dGTP binding.

It belongs to the SAMHD1 family. In terms of assembly, homodimer; in absence of GTP and dNTP. Homotetramer; in GTP- and dNTP-bound form. Interacts with rbbp8/CtIP. It depends on Zn(2+) as a cofactor.

It is found in the nucleus. The protein localises to the chromosome. It carries out the reaction a 2'-deoxyribonucleoside 5'-triphosphate + H2O = a 2'-deoxyribonucleoside + triphosphate + H(+). The catalysed reaction is dATP + H2O = 2'-deoxyadenosine + triphosphate + H(+). It catalyses the reaction dCTP + H2O = 2'-deoxycytidine + triphosphate + H(+). The enzyme catalyses dGTP + H2O = 2'-deoxyguanosine + triphosphate + H(+). It carries out the reaction dTTP + H2O = thymidine + triphosphate + H(+). Allosterically activated and regulated via the combined actions of GTP and dNTPs (dATP, dGTP, dTTP and dCTP): Allosteric site 1 binds GTP, while allosteric site 2 binds dNTP. Allosteric activation promotes the formation of highly active homotetramers. In terms of biological role, protein that acts both as a host restriction factor involved in defense response to virus and as a regulator of DNA end resection at stalled replication forks. Has deoxynucleoside triphosphate (dNTPase) activity, which is required to restrict infection by viruses: dNTPase activity reduces cellular dNTP levels to levels too low for retroviral reverse transcription to occur, blocking early-stage virus replication in dendritic and other myeloid cells. Functions during S phase at stalled DNA replication forks to promote the resection of gapped or reversed forks: acts by stimulating the exonuclease activity of mre11, activating the ATR-CHK1 pathway and allowing the forks to restart replication. Ability to promote DNA end resection at stalled replication forks is independent of dNTPase activity. The polypeptide is Deoxynucleoside triphosphate triphosphohydrolase SAMHD1 (Xenopus laevis (African clawed frog)).